The primary structure comprises 638 residues: Chaperone protein DnaK (638 aa).

Residue Thr199 is modified to Phosphothreonine; by autocatalysis. The interval 600–638 (EINQKKSEENLKKEDTSSESKKDENVVDAEFEEIKDPKK) is disordered. Basic and acidic residues predominate over residues 602–624 (NQKKSEENLKKEDTSSESKKDEN).

Belongs to the heat shock protein 70 family.

Acts as a chaperone. The polypeptide is Chaperone protein DnaK (Buchnera aphidicola subsp. Schizaphis graminum (strain Sg)).